A 96-amino-acid polypeptide reads, in one-letter code: Conantokin-E (96 aa).

The first 24 residues, 1 to 24, serve as a signal peptide directing secretion; that stretch reads LLVPLVTFHLILGMGTLDHGGALT. Residues 25–72 constitute a propeptide that is removed on maturation; that stretch reads ERRSADATALKPEPVLLQKSDARSTDDNDKDRLTQMKRILKKRGNKAR. Residues 28–57 form a disordered region; the sequence is SADATALKPEPVLLQKSDARSTDDNDKDRL. Residues 44-57 are compositionally biased toward basic and acidic residues; sequence SDARSTDDNDKDRL. Glutamate 75, glutamate 76, glutamate 82, glutamate 86, and glutamate 95 each carry 4-carboxyglutamate. A divalent metal cation-binding residues include glutamate 82 and glutamate 86. Cysteine 83 and cysteine 96 are joined by a disulfide.

The protein belongs to the conotoxin B superfamily. In terms of tissue distribution, expressed by the venom duct.

Its subcellular location is the secreted. In terms of biological role, conantokins inhibit N-methyl-D-aspartate (NMDA) receptors. This toxin has the highest potency for the NR2B/GRIN2B subunit, followed by NR2A/GRIN2A, NR2C/GRIN2C, and NR2D/GRIN2D subunits. The sequence is that of Conantokin-E from Conus ermineus (Agate cone).